Consider the following 165-residue polypeptide: 3-isopropylmalate dehydratase small subunit (165 aa).

Belongs to the LeuD family. LeuD type 2 subfamily. In terms of assembly, heterodimer of LeuC and LeuD.

It carries out the reaction (2R,3S)-3-isopropylmalate = (2S)-2-isopropylmalate. It participates in amino-acid biosynthesis; L-leucine biosynthesis; L-leucine from 3-methyl-2-oxobutanoate: step 2/4. Functionally, catalyzes the isomerization between 2-isopropylmalate and 3-isopropylmalate, via the formation of 2-isopropylmaleate. The sequence is that of 3-isopropylmalate dehydratase small subunit from Helicobacter hepaticus (strain ATCC 51449 / 3B1).